A 122-amino-acid chain; its full sequence is Large ribosomal subunit protein uL14 (122 aa).

The protein belongs to the universal ribosomal protein uL14 family. As to quaternary structure, part of the 50S ribosomal subunit. Forms a cluster with proteins L3 and L19. In the 70S ribosome, L14 and L19 interact and together make contacts with the 16S rRNA in bridges B5 and B8.

In terms of biological role, binds to 23S rRNA. Forms part of two intersubunit bridges in the 70S ribosome. In Burkholderia lata (strain ATCC 17760 / DSM 23089 / LMG 22485 / NCIMB 9086 / R18194 / 383), this protein is Large ribosomal subunit protein uL14.